Consider the following 544-residue polypeptide: Cytochrome P450 2U1 (544 aa).

A run of 4 helical transmembrane segments spans residues 30 to 50 (LDPS…GWSW), 113 to 133 (VYGS…LSDF), 261 to 281 (ICLN…YLPF), and 342 to 362 (LFYI…NSLL). Cys-490 contacts heme. A helical transmembrane segment spans residues 495-515 (LAKMELFLMFVSLMQSFAFAL).

The protein belongs to the cytochrome P450 family. The cofactor is heme. Widely expressed with stronger expression in thymus, heart and cerebellum.

The protein resides in the endoplasmic reticulum membrane. It localises to the microsome membrane. The protein localises to the mitochondrion inner membrane. The enzyme catalyses an omega-methyl-long-chain fatty acid + reduced [NADPH--hemoprotein reductase] + O2 = an omega-hydroxy-long-chain fatty acid + oxidized [NADPH--hemoprotein reductase] + H2O + H(+). It catalyses the reaction (5Z,8Z,11Z,14Z)-eicosatetraenoate + reduced [NADPH--hemoprotein reductase] + O2 = 19-hydroxy-(5Z,8Z,11Z,14Z)-eicosatetraenoate + oxidized [NADPH--hemoprotein reductase] + H2O + H(+). The catalysed reaction is (5Z,8Z,11Z,14Z)-eicosatetraenoate + reduced [NADPH--hemoprotein reductase] + O2 = 20-hydroxy-(5Z,8Z,11Z,14Z)-eicosatetraenoate + oxidized [NADPH--hemoprotein reductase] + H2O + H(+). It carries out the reaction N-[(5Z,8Z,11Z,14Z)-eicosatetraenoyl]-serotonin + reduced [NADPH--hemoprotein reductase] + O2 = 2-oxo-N-[(5Z,8Z,11Z,14Z)-eicosatetraenoyl]-serotonin + oxidized [NADPH--hemoprotein reductase] + H2O + H(+). Its pathway is lipid metabolism; arachidonate metabolism. A cytochrome P450 monooxygenase involved in the metabolism of arachidonic acid and its conjugates. Mechanistically, uses molecular oxygen inserting one oxygen atom into a substrate, and reducing the second into a water molecule, with two electrons provided by NADPH via cytochrome P450 reductase (CPR; NADPH-ferrihemoprotein reductase). Acts as an omega and omega-1 hydroxylase for arachidonic acid and possibly for other long chain fatty acids. May modulate the arachidonic acid signaling pathway and play a role in other fatty acid signaling processes. May down-regulate the biological activities of N-arachidonoyl-serotonin, an endocannabinoid that has anti-nociceptive effects through inhibition of fatty acid amide hydrolase FAAH, TRPV1 receptor and T-type calcium channels. Catalyzes C-2 oxidation of the indole ring of N-arachidonoyl-serotonin forming a less active product 2-oxo-N-arachidonoyl-serotonin. The sequence is that of Cytochrome P450 2U1 from Homo sapiens (Human).